A 315-amino-acid chain; its full sequence is 7,8-didemethyl-8-hydroxy-5-deazariboflavin synthase (315 aa).

The 232-residue stretch at 6–237 (ITYSPAFTLV…EDITIQIPAN (232 aa)) folds into the Radical SAM core domain. The [4Fe-4S] cluster site is built by Cys-20, Cys-24, and Cys-27.

It belongs to the radical SAM superfamily. CofG family. Consists of two subunits, CofG and CofH. The cofactor is [4Fe-4S] cluster.

It catalyses the reaction 5-amino-5-(4-hydroxybenzyl)-6-(D-ribitylimino)-5,6-dihydrouracil + S-adenosyl-L-methionine = 7,8-didemethyl-8-hydroxy-5-deazariboflavin + 5'-deoxyadenosine + L-methionine + NH4(+) + H(+). Its pathway is cofactor biosynthesis; coenzyme F0 biosynthesis. Functionally, catalyzes the radical-mediated synthesis of 7,8-didemethyl-8-hydroxy-5-deazariboflavin from 5-amino-5-(4-hydroxybenzyl)-6-(D-ribitylimino)-5,6-dihydrouracil. This Thermosynechococcus vestitus (strain NIES-2133 / IAM M-273 / BP-1) protein is 7,8-didemethyl-8-hydroxy-5-deazariboflavin synthase.